A 76-amino-acid polypeptide reads, in one-letter code: uncharacterized protein (76 aa).

This is an uncharacterized protein from Sulfolobus islandicus filamentous virus (isolate Iceland/Hveragerdi) (SIFV).